Reading from the N-terminus, the 121-residue chain is Prismalin-14 (121 aa).

The signal sequence occupies residues 1 to 16 (MRSLLVLLALAACASA). Gln17 is subject to Pyrrolidone carboxylic acid. 4 repeat units span residues 48-51 (PIYR), 52-55 (PIYR), 56-59 (PIYY), and 60-63 (PQII). The tract at residues 48–63 (PIYRPIYRPIYYPQII) is 4 X 4 AA approximate tandem repeats of P-I-Y-R.

In terms of tissue distribution, expressed only at the mantle edge where it is found predominantly in the inner side of the outer mantle fold.

In terms of biological role, displays inhibitory activity against calcium carbonate precipitation, binds calcium and affects crystallization of calcium carbonate in vitro. May be involved in calcification of the prismatic layer of the shell. The chain is Prismalin-14 from Pinctada fucata (Akoya pearl oyster).